A 357-amino-acid chain; its full sequence is tRNA N6-adenosine threonylcarbamoyltransferase (357 aa).

Fe cation contacts are provided by His-113 and His-117. Substrate contacts are provided by residues 136-140 (LVSGG), Asp-169, Gly-182, and Asn-288. Asp-316 contributes to the Fe cation binding site.

It belongs to the KAE1 / TsaD family. Fe(2+) is required as a cofactor.

It is found in the cytoplasm. It carries out the reaction L-threonylcarbamoyladenylate + adenosine(37) in tRNA = N(6)-L-threonylcarbamoyladenosine(37) in tRNA + AMP + H(+). In terms of biological role, required for the formation of a threonylcarbamoyl group on adenosine at position 37 (t(6)A37) in tRNAs that read codons beginning with adenine. Is involved in the transfer of the threonylcarbamoyl moiety of threonylcarbamoyl-AMP (TC-AMP) to the N6 group of A37, together with TsaE and TsaB. TsaD likely plays a direct catalytic role in this reaction. This chain is tRNA N6-adenosine threonylcarbamoyltransferase, found in Gemmatimonas aurantiaca (strain DSM 14586 / JCM 11422 / NBRC 100505 / T-27).